The following is a 142-amino-acid chain: Protein E6 (142 aa).

Zinc fingers lie at residues 27–63 (CIFC…CTKC) and 100–136 (CQHC…CRNC).

This sequence belongs to the papillomaviridae E6 protein family. In terms of assembly, forms homodimers. Interacts with ubiquitin-protein ligase UBE3A/E6-AP; this interaction stimulates UBE3A ubiquitin activity. Interacts with host BAK1.

The protein localises to the host cytoplasm. Its subcellular location is the host nucleus. Its function is as follows. Plays a major role in the induction and maintenance of cellular transformation. E6 associates with host UBE3A/E6-AP ubiquitin-protein ligase and modulates its activity. Protects host keratinocytes from apoptosis by mediating the degradation of host BAK1. May also inhibit host immune response. The sequence is that of Protein E6 from Homo sapiens (Human).